A 281-amino-acid chain; its full sequence is Phytanoyl-CoA dioxygenase 1 (281 aa).

Residues Lys98, Met137, 152–154 (HQD), and Trp169 contribute to the 2-oxoglutarate site. Residues His152 and Asp154 each contribute to the Fe cation site. His237 provides a ligand contact to Fe cation. Ser239 and Arg248 together coordinate 2-oxoglutarate.

This sequence belongs to the PhyH family. Fe cation is required as a cofactor. The cofactor is L-ascorbate.

The catalysed reaction is phytanoyl-CoA + 2-oxoglutarate + O2 = 2-hydroxyphytanoyl-CoA + succinate + CO2. Its pathway is lipid metabolism; fatty acid metabolism. Converts phytanoyl-CoA to 2-hydroxyphytanoyl-CoA. The protein is Phytanoyl-CoA dioxygenase 1 of Oryza sativa subsp. japonica (Rice).